The following is a 242-amino-acid chain: Potassium/proton antiporter CemA (242 aa).

2 helical membrane passes run 116-136 (IIFCLSTNIISFTILSGYSIL) and 200-220 (ISGFVSTFPVFLDTFFKYLIF).

Belongs to the CemA family.

The protein localises to the plastid. It localises to the chloroplast inner membrane. It carries out the reaction K(+)(in) + H(+)(out) = K(+)(out) + H(+)(in). Contributes to K(+)/H(+) antiport activity by supporting proton efflux to control proton extrusion and homeostasis in chloroplasts in a light-dependent manner to modulate photosynthesis. Prevents excessive induction of non-photochemical quenching (NPQ) under continuous-light conditions. Indirectly promotes efficient inorganic carbon uptake into chloroplasts. This chain is Potassium/proton antiporter CemA, found in Chloranthus spicatus (Chulantree).